Here is a 259-residue protein sequence, read N- to C-terminus: Ribonuclease HII (259 aa).

The region spanning 70 to 258 is the RNase H type-2 domain; that stretch reads TLIAGIDEVG…VKSLVLGKKE (189 aa). Asp76, Glu77, and Asp168 together coordinate a divalent metal cation.

This sequence belongs to the RNase HII family. Mn(2+) is required as a cofactor. The cofactor is Mg(2+).

It localises to the cytoplasm. The catalysed reaction is Endonucleolytic cleavage to 5'-phosphomonoester.. Functionally, endonuclease that specifically degrades the RNA of RNA-DNA hybrids. The sequence is that of Ribonuclease HII from Streptococcus pneumoniae (strain Hungary19A-6).